Consider the following 400-residue polypeptide: Phosphoglycerate kinase (400 aa).

Substrate-binding positions include 21–23 (DFN), arginine 37, 60–63 (HLGR), arginine 121, and arginine 154. ATP-binding positions include lysine 204, glutamate 326, and 355–358 (GGDS).

The protein belongs to the phosphoglycerate kinase family. As to quaternary structure, monomer.

It is found in the cytoplasm. It catalyses the reaction (2R)-3-phosphoglycerate + ATP = (2R)-3-phospho-glyceroyl phosphate + ADP. Its pathway is carbohydrate degradation; glycolysis; pyruvate from D-glyceraldehyde 3-phosphate: step 2/5. The sequence is that of Phosphoglycerate kinase from Chloroflexus aggregans (strain MD-66 / DSM 9485).